Here is a 151-residue protein sequence, read N- to C-terminus: MATIESKLVEMLTVPVEALGFKLWGIEYIQAGRHSILRVFIDHENGINIEDCAEASRQVSAVMDVEDPISTEYTLEVSSPGVDRPLFTAEQYRAYIGEETKVQLTMPVAGSRNLKGVISSVDGQMLTITVDGKDLIVALDNIRKGNVIAKF.

Belongs to the RimP family.

It is found in the cytoplasm. Required for maturation of 30S ribosomal subunits. The protein is Ribosome maturation factor RimP of Shewanella frigidimarina (strain NCIMB 400).